A 223-amino-acid chain; its full sequence is Glutathione S-transferase U6 (223 aa).

Positions 5–84 constitute a GST N-terminal domain; it reads EEVKLLGIWA…YIDETWKHNP (80 aa). Glutathione contacts are provided by residues 15 to 16, 41 to 42, 55 to 56, and 68 to 69; these read SP, NK, KI, and ES. Residues 89–216 enclose the GST C-terminal domain; that stretch reads DPFQRSKARV…EKHIEHMNNM (128 aa). A Phosphothreonine modification is found at T150.

Belongs to the GST superfamily. Tau family.

Its subcellular location is the cytoplasm. The protein resides in the cytosol. It catalyses the reaction RX + glutathione = an S-substituted glutathione + a halide anion + H(+). Its function is as follows. May be involved in the conjugation of reduced glutathione to a wide number of exogenous and endogenous hydrophobic electrophiles and have a detoxification role against certain herbicides. This Arabidopsis thaliana (Mouse-ear cress) protein is Glutathione S-transferase U6 (GSTU6).